The chain runs to 1176 residues: Leucine--tRNA ligase, cytoplasmic (1176 aa).

Tyrosine 52 and tyrosine 54 together coordinate L-leucine. The 'HIGH' region signature appears at 60-63 (HLGH). The segment at 115–142 (PDFPDEEDEEEETNVKTEDTRIKDKAKG) is disordered. Positions 117 to 126 (FPDEEDEEEE) are enriched in acidic residues. A compositionally biased stretch (basic and acidic residues) spans 127–139 (TNVKTEDTRIKDK). Serine 167 carries the post-translational modification Phosphoserine. The segment at 260 to 509 (GPQEYTLLKL…DAGDALIYME (250 aa)) is editing domain. Residues leucine 594 and serine 597 each contribute to the L-leucine site. The 'KMSKS' region motif lies at 716–720 (KMSKS). Lysine 719 contacts ATP. Serine 720 carries the phosphoserine modification. An N6-acetyllysine mark is found at lysine 970 and lysine 1047.

This sequence belongs to the class-I aminoacyl-tRNA synthetase family.

The protein localises to the cytoplasm. It catalyses the reaction tRNA(Leu) + L-leucine + ATP = L-leucyl-tRNA(Leu) + AMP + diphosphate. The catalysed reaction is L-methionyl-tRNA(Leu) + H2O = tRNA(Leu) + L-methionine + H(+). 5-fluoro-1,3-dihydro-1-hydroxy-1,2-benzoxaborole inhibits LARS1 by forming a covalent adduct with the 3' adenosine of tRNA(Leu) at the editing site, thus locking the enzyme in an inactive conformation. Aminoacyl-tRNA synthetase that catalyzes the specific attachment of leucine to its cognate tRNA (tRNA(Leu)). It performs tRNA aminoacylation in a two-step reaction: Leu is initially activated by ATP to form a leucyl-adenylate (Leu-AMP) intermediate; then the leucyl moiety is transferred to the acceptor 3' end of the tRNA to yield leucyl-tRNA. To improve the fidelity of catalytic reactions, it is also able to hydrolyze misactivated aminoacyl-adenylate intermediates (pre-transfer editing) and mischarged aminoacyl-tRNAs (post-transfer editing). The polypeptide is Leucine--tRNA ligase, cytoplasmic (LARS1) (Pongo abelii (Sumatran orangutan)).